The following is a 478-amino-acid chain: Cytochrome c-552 (478 aa).

A signal peptide spans methionine 1–alanine 26. Heme c is bound at residue histidine 94. Cysteine 122, cysteine 125, and lysine 126 together coordinate heme. Residues cysteine 160, cysteine 163, histidine 164, cysteine 209, cysteine 212, and histidine 213 each coordinate heme c. Ca(2+) is bound by residues glutamate 215, tyrosine 216, lysine 261, and glutamine 263. Tyrosine 216 provides a ligand contact to substrate. Histidine 264 contributes to the substrate binding site. 9 residues coordinate heme c: histidine 275, cysteine 282, cysteine 285, histidine 286, histidine 301, cysteine 314, cysteine 317, histidine 318, and histidine 393.

The protein belongs to the cytochrome c-552 family. It depends on Ca(2+) as a cofactor. The cofactor is heme c.

The protein localises to the periplasm. The enzyme catalyses 6 Fe(III)-[cytochrome c] + NH4(+) + 2 H2O = 6 Fe(II)-[cytochrome c] + nitrite + 8 H(+). It participates in nitrogen metabolism; nitrate reduction (assimilation). Functionally, catalyzes the reduction of nitrite to ammonia, consuming six electrons in the process. The chain is Cytochrome c-552 from Escherichia coli O157:H7 (strain EC4115 / EHEC).